Consider the following 387-residue polypeptide: WD repeat-containing protein 89 (387 aa).

6 WD repeats span residues 21 to 65, 68 to 107, 112 to 156, 168 to 208, 214 to 254, and 319 to 358; these read KEPT…VLRE, GYPG…EKPV, GYPS…QNLS, THSD…EEDA, NSIS…TDEP, and GHAA…KTFT.

In Homo sapiens (Human), this protein is WD repeat-containing protein 89 (WDR89).